We begin with the raw amino-acid sequence, 150 residues long: UPF0178 protein PC1_0756 (150 aa).

It belongs to the UPF0178 family.

This is UPF0178 protein PC1_0756 from Pectobacterium carotovorum subsp. carotovorum (strain PC1).